The chain runs to 190 residues: Translation initiation factor IF-3 (190 aa).

It belongs to the IF-3 family. As to quaternary structure, monomer.

Its subcellular location is the cytoplasm. In terms of biological role, IF-3 binds to the 30S ribosomal subunit and shifts the equilibrium between 70S ribosomes and their 50S and 30S subunits in favor of the free subunits, thus enhancing the availability of 30S subunits on which protein synthesis initiation begins. This chain is Translation initiation factor IF-3, found in Prochlorococcus marinus (strain AS9601).